The following is a 114-amino-acid chain: Histone H2B (114 aa).

Residues 1 to 22 (MAKTPSKKAAKAPKKAGSKRNK) are disordered. Residue K3 is modified to N6-acetyllysine. K110 participates in a covalent cross-link: Glycyl lysine isopeptide (Lys-Gly) (interchain with G-Cter in ubiquitin).

The protein belongs to the histone H2B family. As to quaternary structure, the nucleosome is a histone octamer containing two molecules each of H2A, H2B, H3 and H4 assembled in one H3-H4 heterotetramer and two H2A-H2B heterodimers. The octamer wraps approximately 147 bp of DNA. Monoubiquitination of Lys-110 gives a specific tag for epigenetic transcriptional activation and is also prerequisite for histone H3 'Lys-4' and 'Lys-79' methylation.

Its subcellular location is the nucleus. The protein resides in the chromosome. In terms of biological role, core component of nucleosome. Nucleosomes wrap and compact DNA into chromatin, limiting DNA accessibility to the cellular machineries which require DNA as a template. Histones thereby play a central role in transcription regulation, DNA repair, DNA replication and chromosomal stability. DNA accessibility is regulated via a complex set of post-translational modifications of histones, also called histone code, and nucleosome remodeling. This chain is Histone H2B, found in Olisthodiscus luteus (Marine phytoflagellate).